The chain runs to 907 residues: Protein translocase subunit SecA (907 aa).

Residues glutamine 87, 105-109 (GEGKT), and aspartate 513 each bind ATP. Over residues 841 to 853 (EAQRRAQAEEAAR) the composition is skewed to basic and acidic residues. The tract at residues 841–907 (EAQRRAQAEE…KYKQCHGQIN (67 aa)) is disordered. The segment covering 854-865 (RAQAQHASAQSQ) has biased composition (low complexity). Positions 872–887 (EGHHQPVVRDERKVGR) are enriched in basic and acidic residues. Positions 891, 893, 902, and 903 each coordinate Zn(2+).

It belongs to the SecA family. Monomer and homodimer. Part of the essential Sec protein translocation apparatus which comprises SecA, SecYEG and auxiliary proteins SecDF-YajC and YidC. Zn(2+) is required as a cofactor.

Its subcellular location is the cell inner membrane. It localises to the cytoplasm. The enzyme catalyses ATP + H2O + cellular proteinSide 1 = ADP + phosphate + cellular proteinSide 2.. In terms of biological role, part of the Sec protein translocase complex. Interacts with the SecYEG preprotein conducting channel. Has a central role in coupling the hydrolysis of ATP to the transfer of proteins into and across the cell membrane, serving both as a receptor for the preprotein-SecB complex and as an ATP-driven molecular motor driving the stepwise translocation of polypeptide chains across the membrane. In Vibrio vulnificus (strain CMCP6), this protein is Protein translocase subunit SecA.